Here is a 270-residue protein sequence, read N- to C-terminus: MNDKTHLGHTARKRFGQNFLHDDYIIDSIVGAIAPQWEDNIVEIGPGLGALTEPVASKVKCLNVIELDRDLAARLAEHPVLGDKLNITQADALQFDFGKLASTERPLRVFGNLPYNISTPLMFHLFEYADKISDMHFMLQKEVVNRLCAGPNCKAYGRLTVMAQYYCRIIPVLEVPPTAFKPAPKVDSAVVRLEPYDTPPFIAKSLKCLTQVCSMAFNQRRKTIRNGLRDLLSIEQLQEIGIDTTKRAENISVEEYVNIANYVFDLKENK.

S-adenosyl-L-methionine-binding residues include asparagine 18, leucine 20, glycine 45, glutamate 66, aspartate 91, and asparagine 112.

It belongs to the class I-like SAM-binding methyltransferase superfamily. rRNA adenine N(6)-methyltransferase family. RsmA subfamily.

The protein resides in the cytoplasm. The catalysed reaction is adenosine(1518)/adenosine(1519) in 16S rRNA + 4 S-adenosyl-L-methionine = N(6)-dimethyladenosine(1518)/N(6)-dimethyladenosine(1519) in 16S rRNA + 4 S-adenosyl-L-homocysteine + 4 H(+). Its function is as follows. Specifically dimethylates two adjacent adenosines (A1518 and A1519) in the loop of a conserved hairpin near the 3'-end of 16S rRNA in the 30S particle. May play a critical role in biogenesis of 30S subunits. The protein is Ribosomal RNA small subunit methyltransferase A of Psychromonas ingrahamii (strain DSM 17664 / CCUG 51855 / 37).